Reading from the N-terminus, the 95-residue chain is UPF0473 protein GWCH70_2487 (95 aa).

This sequence belongs to the UPF0473 family.

The polypeptide is UPF0473 protein GWCH70_2487 (Geobacillus sp. (strain WCH70)).